Consider the following 505-residue polypeptide: 2,3-bisphosphoglycerate-independent phosphoglycerate mutase (505 aa).

Residues aspartate 13 and serine 63 each contribute to the Mn(2+) site. Serine 63 serves as the catalytic Phosphoserine intermediate. Substrate is bound by residues histidine 124, arginine 153–aspartate 154, arginine 183, arginine 189, arginine 254–arginine 257, and lysine 330. Mn(2+) is bound by residues aspartate 396, histidine 400, aspartate 437, histidine 438, and histidine 456.

It belongs to the BPG-independent phosphoglycerate mutase family. In terms of assembly, monomer. The cofactor is Mn(2+).

It carries out the reaction (2R)-2-phosphoglycerate = (2R)-3-phosphoglycerate. It participates in carbohydrate degradation; glycolysis; pyruvate from D-glyceraldehyde 3-phosphate: step 3/5. Catalyzes the interconversion of 2-phosphoglycerate and 3-phosphoglycerate. This chain is 2,3-bisphosphoglycerate-independent phosphoglycerate mutase, found in Roseobacter denitrificans (strain ATCC 33942 / OCh 114) (Erythrobacter sp. (strain OCh 114)).